The chain runs to 1032 residues: Unconventional myosin-Ih (1032 aa).

Residues 12–701 enclose the Myosin motor domain; that stretch reads GVQDFVLLDA…TLFATEDAFE (690 aa). 105–112 is an ATP binding site; the sequence is GESGAGKT. At S365 the chain carries Phosphoserine. Residues 578–600 are actin-binding; that stretch reads LSSLLETLISKEPSYIRCIKPND. IQ domains follow at residues 704-726 and 727-756; these read KHQL…EYVK and KRQA…AVRI. The TH1 domain maps to 855–1029; sequence KDGYTESLNQ…NGQLTVVSVR (175 aa).

This sequence belongs to the TRAFAC class myosin-kinesin ATPase superfamily. Myosin family.

Myosins are actin-based motor molecules with ATPase activity. Unconventional myosins serve in intracellular movements. Their highly divergent tails are presumed to bind to membranous compartments, which would be moved relative to actin filaments. The polypeptide is Unconventional myosin-Ih (MYO1H) (Homo sapiens (Human)).